Reading from the N-terminus, the 315-residue chain is MPLKLRGKKKAKSKETAGLVEGEPTGAGGGSLSASRAPARRLVFHAQLAHGSATGRVEGFSSIQELYAQIAGAFEISPSEILYCTLNTPKIDMERLLGGQLGLEDFIFAHVKGIEKEVNVYKSEDSLGLTITDNGVGYAFIKRIKDGGVIDSVKTICVGDHIESINGENIVGWRHYDVAKKLKELKKEELFTMKLIEPKKAFEIELRSKAGKSSGEKIGCGRATLRLRSKGPATVEEMPSETKAKAIEKIDDVLELYMGIRDIDLATTMFEAGKDKVNPDEFAVALDETLGDFAFPDEFVFDVWGVIGDAKRRGL.

The segment covering Met1–Lys12 has biased composition (basic residues). The disordered stretch occupies residues Met1 to Ala34. A PDZ domain is found at Glu117–Glu197.

This sequence belongs to the GIPC family. As to quaternary structure, probably interacts with SEMA5A. Expressed at highest levels in ascending colon and at moderate levels in adult kidney. Expressed at low levels in adult pancreas and at very low levels in adult liver. Expression is down-regulated in several primary tumors, such as kidney, colon and rectal tumors.

The protein resides in the cytoplasm. The polypeptide is PDZ domain-containing protein GIPC2 (GIPC2) (Homo sapiens (Human)).